We begin with the raw amino-acid sequence, 605 residues long: Endonuclease 8-like 3 (605 aa).

Residue Val2 is the Schiff-base intermediate with DNA; via amino nitrogen of the active site. Asn192 and Arg271 together coordinate DNA. Residues 247–281 (KVYKRPNCGQCHCRITVCRFGDNNRMTYFCPHCQK) form an FPG-type zinc finger. The RanBP2-type zinc-finger motif lies at 317 to 346 (SEEHWTCVVCTLINKPSSKACDACLTSRPI). Ser450 bears the Phosphoserine mark. Positions 456-477 (ESKLFSPAHKKPKTAQYSSPEL) are disordered. Positions 507, 510, 533, 541, 554, 556, 579, and 587 each coordinate Zn(2+). 2 consecutive GRF-type zinc fingers follow at residues 507–550 (CSKH…ADLS) and 554–596 (CNHG…AENG).

This sequence belongs to the FPG family. In terms of tissue distribution, expressed in keratinocytes and embryonic fibroblasts (at protein level). Also detected in thymus, testis and fetal lung primary fibroblasts.

The protein resides in the nucleus. Its subcellular location is the chromosome. The catalysed reaction is 2'-deoxyribonucleotide-(2'-deoxyribose 5'-phosphate)-2'-deoxyribonucleotide-DNA = a 3'-end 2'-deoxyribonucleotide-(2,3-dehydro-2,3-deoxyribose 5'-phosphate)-DNA + a 5'-end 5'-phospho-2'-deoxyribonucleoside-DNA + H(+). DNA glycosylase which prefers single-stranded DNA (ssDNA), or partially ssDNA structures such as bubble and fork structures, to double-stranded DNA (dsDNA). Mediates interstrand cross-link repair in response to replication stress: acts by mediating DNA glycosylase activity, cleaving one of the two N-glycosyl bonds comprising the interstrand cross-link, which avoids the formation of a double-strand break but generates an abasic site that is bypassed by translesion synthesis polymerases. In vitro, displays strong glycosylase activity towards the hydantoin lesions spiroiminodihydantoin (Sp) and guanidinohydantoin (Gh) in both ssDNA and dsDNA; also recognizes FapyA, FapyG, 5-OHU, 5-OHC, 5-OHMH, Tg and 8-oxoA lesions in ssDNA. No activity on 8-oxoG detected. Also shows weak DNA-(apurinic or apyrimidinic site) lyase activity. In vivo, appears to be the primary enzyme involved in removing Sp and Gh from ssDNA in neonatal tissues. The protein is Endonuclease 8-like 3 (NEIL3) of Homo sapiens (Human).